A 418-amino-acid chain; its full sequence is MSSVPIDSVQAAQQVVSTKIKDKSWIMPTDPAEFLQQIAYQSQLLACLHWLGEFQILACVPLSGSVPIKDVADLAGVPVSQLAHVIRFMATAGFMKEPRRGEVAHTPQSAAFVTDPSFLDAGIFLAQVSARSARKMAQNSAISTLMGGDGANNGSDFDNGELLKSTSESPRVQREVTAYLHYVVNEVSDTANLLAQLDWRKLGSSSVVEIRADRIYPASLVLTELHSTPRFTVQTFQEDSVEQGTAVTTTATTSSSFISKSSEEPSPKRIKPGITYQKRSLGSPQVVTDATMYVMRLERPHSTSVQRSILDEGQIVSELRAHLGVLKHNSNATLILIGPLLPEAGAIDAKAEMVVRFRDLSLNQLTSEREMEVGELVDIIGDVQDESGCLVVVNKLYSRTSSTVALEVRYELYNYRKG.

The segment at 244 to 272 (GTAVTTTATTSSSFISKSSEEPSPKRIKP) is disordered. Over residues 245-260 (TAVTTTATTSSSFISK) the composition is skewed to low complexity.

The protein localises to the nucleus. Transcription factor that, with ptaR2 and ptaR3, coregulates the expression of the gene cluster that mediates the biosynthesis of pestheic acid, a diphenyl ether which is a biosynthetic precursor of the unique chloropupukeananes. The polypeptide is Pestheic acid cluster transcriptional regulator 1 (Pestalotiopsis fici (strain W106-1 / CGMCC3.15140)).